Here is a 397-residue protein sequence, read N- to C-terminus: Elongation factor Tu (397 aa).

The tr-type G domain maps to Lys-10 to Glu-206. Positions Gly-19–Thr-26 are G1. GTP is bound at residue Gly-19–Thr-26. Thr-26 is a binding site for Mg(2+). The G2 stretch occupies residues Gly-62 to Ser-66. Residues Asp-83–Gly-86 form a G3 region. GTP-binding positions include Asp-83 to His-87 and Asn-138 to Asp-141. The interval Asn-138 to Asp-141 is G4. The interval Ser-176–Leu-178 is G5.

The protein belongs to the TRAFAC class translation factor GTPase superfamily. Classic translation factor GTPase family. EF-Tu/EF-1A subfamily. Monomer.

Its subcellular location is the cytoplasm. The catalysed reaction is GTP + H2O = GDP + phosphate + H(+). Its function is as follows. GTP hydrolase that promotes the GTP-dependent binding of aminoacyl-tRNA to the A-site of ribosomes during protein biosynthesis. The polypeptide is Elongation factor Tu (Salinispora arenicola (strain CNS-205)).